We begin with the raw amino-acid sequence, 223 residues long: Shematrin-like protein 2 (223 aa).

Residues 1 to 19 (MRILANLILLGVLFGVCLC) form the signal peptide.

In terms of tissue distribution, prismatic layer of shell (at protein level).

It is found in the secreted. The protein is Shematrin-like protein 2 of Margaritifera margaritifera (Freshwater pearl mussel).